A 341-amino-acid polypeptide reads, in one-letter code: RNA 3'-terminal phosphate cyclase (341 aa).

ATP contacts are provided by residues Gln-102 and 283-287 (HLADQ). Residue His-308 is the Tele-AMP-histidine intermediate of the active site.

The protein belongs to the RNA 3'-terminal cyclase family. Type 1 subfamily.

It is found in the cytoplasm. The enzyme catalyses a 3'-end 3'-phospho-ribonucleotide-RNA + ATP = a 3'-end 2',3'-cyclophospho-ribonucleotide-RNA + AMP + diphosphate. Catalyzes the conversion of 3'-phosphate to a 2',3'-cyclic phosphodiester at the end of RNA. The mechanism of action of the enzyme occurs in 3 steps: (A) adenylation of the enzyme by ATP; (B) transfer of adenylate to an RNA-N3'P to produce RNA-N3'PP5'A; (C) and attack of the adjacent 2'-hydroxyl on the 3'-phosphorus in the diester linkage to produce the cyclic end product. The biological role of this enzyme is unknown but it is likely to function in some aspects of cellular RNA processing. The protein is RNA 3'-terminal phosphate cyclase of Pseudomonas aeruginosa (strain UCBPP-PA14).